A 246-amino-acid polypeptide reads, in one-letter code: Phosducin (246 aa).

Over residues 1–14 (MEEAKSQSLEEDFE) the composition is skewed to acidic residues. The segment at 1–70 (MEEAKSQSLE…GKDSKERVSR (70 aa)) is disordered. Residues 1–244 (MEEAKSQSLE…LEHTKIEEED (244 aa)) enclose the Phosducin domain. A compositionally biased stretch (basic and acidic residues) spans 60–69 (NGKDSKERVS). Serine 73 is subject to Phosphoserine; by PKA. The interval 111–246 (YGFVYELETG…HTKIEEEDVE (136 aa)) is thioredoxin fold.

This sequence belongs to the phosducin family. As to quaternary structure, forms a complex with the beta and gamma subunits of the GTP-binding protein, transducin. Interacts with CRX. Light-induced changes in cyclic nucleotide levels modulate the phosphorylation of this protein by cAMP kinase.

Its subcellular location is the cytoplasm. It localises to the cytosol. It is found in the nucleus. The protein localises to the cell projection. The protein resides in the cilium. Its subcellular location is the photoreceptor outer segment. It localises to the photoreceptor inner segment. Its function is as follows. May participate in the regulation of visual phototransduction or in the integration of photoreceptor metabolism. Inhibits the transcriptional activation activity of the cone-rod homeobox CRX. The chain is Phosducin (PDC) from Homo sapiens (Human).